An 85-amino-acid chain; its full sequence is Putative membrane protein insertion efficiency factor (85 aa).

It belongs to the UPF0161 family.

It is found in the cell inner membrane. Its function is as follows. Could be involved in insertion of integral membrane proteins into the membrane. This Escherichia coli O157:H7 protein is Putative membrane protein insertion efficiency factor.